A 499-amino-acid chain; its full sequence is Glycerol kinase (499 aa).

T17 lines the ADP pocket. ATP is bound by residues T17, T18, and S19. T17 is a sn-glycerol 3-phosphate binding site. R21 serves as a coordination point for ADP. Residues R87, E88, Y139, and D243 each contribute to the sn-glycerol 3-phosphate site. 5 residues coordinate glycerol: R87, E88, Y139, D243, and Q244. 2 residues coordinate ADP: T265 and G308. ATP-binding residues include T265, G308, Q312, and G409. 2 residues coordinate ADP: G409 and N413.

Belongs to the FGGY kinase family.

It carries out the reaction glycerol + ATP = sn-glycerol 3-phosphate + ADP + H(+). It participates in polyol metabolism; glycerol degradation via glycerol kinase pathway; sn-glycerol 3-phosphate from glycerol: step 1/1. With respect to regulation, inhibited by fructose 1,6-bisphosphate (FBP). Its function is as follows. Key enzyme in the regulation of glycerol uptake and metabolism. Catalyzes the phosphorylation of glycerol to yield sn-glycerol 3-phosphate. This chain is Glycerol kinase, found in Pseudomonas putida (strain GB-1).